The sequence spans 72 residues: DNA-directed RNA polymerase subunit Rpo10 (72 aa).

Zn(2+) is bound by residues cysteine 7, cysteine 10, cysteine 53, and cysteine 54.

It belongs to the archaeal Rpo10/eukaryotic RPB10 RNA polymerase subunit family. As to quaternary structure, part of the RNA polymerase complex. Zn(2+) is required as a cofactor.

It localises to the cytoplasm. The catalysed reaction is RNA(n) + a ribonucleoside 5'-triphosphate = RNA(n+1) + diphosphate. DNA-dependent RNA polymerase (RNAP) catalyzes the transcription of DNA into RNA using the four ribonucleoside triphosphates as substrates. The sequence is that of DNA-directed RNA polymerase subunit Rpo10 from Thermoplasma acidophilum (strain ATCC 25905 / DSM 1728 / JCM 9062 / NBRC 15155 / AMRC-C165).